The following is a 256-amino-acid chain: Gramicidin S biosynthesis protein GrsT (256 aa).

Serine 95 is an active-site residue.

The protein belongs to the thioesterase family.

Its pathway is antibiotic biosynthesis; gramicidin S biosynthesis. Functionally, probable thioesterase involved in the biosynthesis of gramicidin S. The chain is Gramicidin S biosynthesis protein GrsT (grsT) from Aneurinibacillus migulanus (Bacillus migulanus).